The primary structure comprises 20 residues: 23 kDa cell wall protein (20 aa).

The protein resides in the secreted. Its subcellular location is the cell wall. The protein is 23 kDa cell wall protein of Solanum lycopersicum (Tomato).